A 349-amino-acid polypeptide reads, in one-letter code: MAELLAIKWDDNRDKLILLDQTILPNKIEYIEYDTAEGVYDSIKDMIVRGAPAIGVTAAYGLYFAAKVAPEDNFENFFKYLKEKSSYLDSSRPTAVNLSWALKVMESKALENKDKDVKEIKSILREEAKRIHEEDIEICKTIGENLITLLKDGMGILTHCNAGQLATSKYGTATSPMYLAKEKGWNFKVYSDETRPRLQGSTLTALELYEAGIDVTTITDNMAAMVMSQGKIDAVIVGCDRVAANGDTANKIGTMGVSILAKYFGIPMYIAAPTPSIDINTKTGEDIPIEERNPEEVTSRFGAWTAPKGVKVYNPGFDVTPHENITAIVTEKGIVYPPFKENLKKLFEK.

Substrate is bound by residues 49–51 (RGA), Arg-92, and Gln-199. Asp-240 acts as the Proton donor in catalysis. Position 250-251 (250-251 (NK)) interacts with substrate.

It belongs to the EIF-2B alpha/beta/delta subunits family. DrdI subfamily.

It catalyses the reaction 5-deoxy-alpha-D-ribose 1-phosphate = 5-deoxy-D-ribulose 1-phosphate. It functions in the pathway carbohydrate degradation. Functionally, catalyzes the isomerization of 5-deoxy-alpha-D-ribose 1-phosphate to 5-deoxy-D-ribulose 1-phosphate, as part of a 5-deoxyribose salvage pathway that recycles this toxic radical SAM enzyme by-product to mainstream metabolites. The protein is 5-deoxyribose 1-phosphate isomerase of Clostridium botulinum (strain Okra / Type B1).